The sequence spans 538 residues: Endoglucanase 16 (538 aa).

An N-terminal signal peptide occupies residues 1–26 (MRWRRVGDVVAVALLLGAAAAAAAAA). D83 serves as the catalytic Nucleophile. Residues H431, D483, and E492 contribute to the active site. The tract at residues 513 to 538 (RQESPSTTTTTTATTSSPEMGLSVNR) is disordered. A compositionally biased stretch (low complexity) spans 516–530 (SPSTTTTTTATTSSP).

This sequence belongs to the glycosyl hydrolase 9 (cellulase E) family.

Its subcellular location is the secreted. The catalysed reaction is Endohydrolysis of (1-&gt;4)-beta-D-glucosidic linkages in cellulose, lichenin and cereal beta-D-glucans.. This Oryza sativa subsp. japonica (Rice) protein is Endoglucanase 16.